The following is a 187-amino-acid chain: Putative manganese efflux pump MntP (187 aa).

The next 6 helical transmembrane spans lie at 3–23 (FYSLIFLSCALGMDAFAVSLC), 35–55 (HYLIVGIYFGGFQALMPTIGY), 56–76 (FIGITFASFIASIDHWIAFIL), 107–127 (LALAIATSIDALAVGVSFAFL), 129–149 (VNLLLAIFLIGIITFILCIIA), and 166–186 (LLGGLVLIILGVKILIEHLFF).

It belongs to the MntP (TC 9.B.29) family.

The protein resides in the cell inner membrane. In terms of biological role, probably functions as a manganese efflux pump. In Campylobacter jejuni subsp. doylei (strain ATCC BAA-1458 / RM4099 / 269.97), this protein is Putative manganese efflux pump MntP.